Reading from the N-terminus, the 412-residue chain is Cinnamoyl-CoA:phenyllactate CoA-transferase (412 aa).

Asn-102 serves as a coordination point for CoA. The active-site Nucleophile is the Asp-176.

As to quaternary structure, homodimer. Part of the heterotrimeric phenyllactate dehydratase complex FldABC, composed of (R)-phenyllactate CoA-transferase (FldA) and a heterodimeric (R)-phenyllactyl-CoA dehydratase (FldB and FldC).

It catalyses the reaction (E)-cinnamoyl-CoA + (R)-3-phenyllactate = (R)-3-phenyllactoyl-CoA + (E)-cinnamate. It functions in the pathway amino-acid degradation; L-phenylalanine degradation. In terms of biological role, component of the phenyllactate dehydratase complex FldABC that is involved in the fermentation of L-phenylalanine via a Stickland reaction. This complex catalyzes the reversible syn-dehydration of (R)-phenyllactate to (E)-cinnamate in two steps, a CoA-transfer from cinnamoyl-CoA to phenyllactate, catalyzed by FldA, followed by the dehydration of phenyllactyl-CoA to cinnamoyl-CoA, catalyzed by FldB and FldC. In vitro, FldA can use 3-phenylpropanoate as a better CoA-acceptor than phenyllactate. The sequence is that of Cinnamoyl-CoA:phenyllactate CoA-transferase from Clostridium sporogenes.